We begin with the raw amino-acid sequence, 398 residues long: Phosphoglycerate kinase (398 aa).

Substrate contacts are provided by residues 21–23 (DFN), Arg36, 59–62 (HLGR), Arg119, and Arg157. ATP contacts are provided by residues Lys208, Gly296, Glu327, and 354–357 (GGDS).

This sequence belongs to the phosphoglycerate kinase family. As to quaternary structure, monomer.

Its subcellular location is the cytoplasm. The enzyme catalyses (2R)-3-phosphoglycerate + ATP = (2R)-3-phospho-glyceroyl phosphate + ADP. It functions in the pathway carbohydrate degradation; glycolysis; pyruvate from D-glyceraldehyde 3-phosphate: step 2/5. The chain is Phosphoglycerate kinase from Streptococcus equi subsp. equi (strain 4047).